The sequence spans 364 residues: Dihydroorotate dehydrogenase (quinone) (364 aa).

FMN is bound by residues 61 to 65 and threonine 85; that span reads AGYDK. Residue lysine 65 participates in substrate binding. 110–114 contacts substrate; it reads NRLGF. Residues asparagine 139 and asparagine 170 each contribute to the FMN site. Position 170 (asparagine 170) interacts with substrate. Serine 173 serves as the catalytic Nucleophile. Asparagine 175 contacts substrate. 2 residues coordinate FMN: lysine 215 and serine 243. Residue 244-245 coordinates substrate; it reads NT. Residues glycine 266, glycine 295, and 316 to 317 contribute to the FMN site; that span reads YT.

Belongs to the dihydroorotate dehydrogenase family. Type 2 subfamily. Monomer. Requires FMN as cofactor.

It localises to the cell membrane. It carries out the reaction (S)-dihydroorotate + a quinone = orotate + a quinol. The protein operates within pyrimidine metabolism; UMP biosynthesis via de novo pathway; orotate from (S)-dihydroorotate (quinone route): step 1/1. Catalyzes the conversion of dihydroorotate to orotate with quinone as electron acceptor. In Brucella canis (strain ATCC 23365 / NCTC 10854 / RM-666), this protein is Dihydroorotate dehydrogenase (quinone).